The following is a 180-amino-acid chain: Putative protein 33K (180 aa).

Residues 31–108 (LEEAYKQLEK…AKAPRNYGTP (78 aa)) form a disordered region. Residues 33–43 (EAYKQLEKELG) show a composition bias toward basic and acidic residues. A compositionally biased stretch (acidic residues) spans 60 to 78 (PLSEGELEEISEEEEEEGE).

The chain is Putative protein 33K from Pantherophis guttatus (Corn snake).